The primary structure comprises 200 residues: MVIRRLYKFCASHVVRNCSSLKCAQNIHGHNYEVEVFIETNRLDNANMALDFGLMQQEMQTFIDSFDHAHHFWDKESPEFQRFIENHCVRYVKCSFNLSAESYALMFLYYLTKILQKSVFSNNEGELKVSSVRVHETKNGYAESFLKDLENPHFKSLVHDHCVSFSQGIQSLWHDKDFFHKIISDEKQCFFHAKPLHQIP.

His13 lines the Zn(2+) pocket. Catalysis depends on Cys23, which acts as the Proton acceptor. Positions 28 and 30 each coordinate Zn(2+). Residues His68 and Glu136 each act as charge relay system in the active site.

Belongs to the PTPS family. QueD subfamily. Requires Zn(2+) as cofactor.

The enzyme catalyses 7,8-dihydroneopterin 3'-triphosphate + H2O = 6-carboxy-5,6,7,8-tetrahydropterin + triphosphate + acetaldehyde + 2 H(+). The protein operates within purine metabolism; 7-cyano-7-deazaguanine biosynthesis. Functionally, catalyzes the conversion of 7,8-dihydroneopterin triphosphate (H2NTP) to 6-carboxy-5,6,7,8-tetrahydropterin (CPH4) and acetaldehyde. The sequence is that of 6-carboxy-5,6,7,8-tetrahydropterin synthase (queD) from Helicobacter pylori (strain J99 / ATCC 700824) (Campylobacter pylori J99).